The sequence spans 469 residues: ATP-dependent protease ATPase subunit HslU (469 aa).

ATP contacts are provided by residues I24, 66–71, D282, E347, and R419; that span reads GVGKTE.

It belongs to the ClpX chaperone family. HslU subfamily. In terms of assembly, a double ring-shaped homohexamer of HslV is capped on each side by a ring-shaped HslU homohexamer. The assembly of the HslU/HslV complex is dependent on binding of ATP.

The protein resides in the cytoplasm. In terms of biological role, ATPase subunit of a proteasome-like degradation complex; this subunit has chaperone activity. The binding of ATP and its subsequent hydrolysis by HslU are essential for unfolding of protein substrates subsequently hydrolyzed by HslV. HslU recognizes the N-terminal part of its protein substrates and unfolds these before they are guided to HslV for hydrolysis. The sequence is that of ATP-dependent protease ATPase subunit HslU from Listeria monocytogenes serotype 4b (strain CLIP80459).